Here is a 330-residue protein sequence, read N- to C-terminus: tRNA U34 carboxymethyltransferase (330 aa).

Carboxy-S-adenosyl-L-methionine is bound by residues K91, W105, K110, G130, 152–154 (DPS), 181–182 (IE), M196, Y200, and R315.

Belongs to the class I-like SAM-binding methyltransferase superfamily. CmoB family. In terms of assembly, homotetramer.

It carries out the reaction carboxy-S-adenosyl-L-methionine + 5-hydroxyuridine(34) in tRNA = 5-carboxymethoxyuridine(34) in tRNA + S-adenosyl-L-homocysteine + H(+). Its function is as follows. Catalyzes carboxymethyl transfer from carboxy-S-adenosyl-L-methionine (Cx-SAM) to 5-hydroxyuridine (ho5U) to form 5-carboxymethoxyuridine (cmo5U) at position 34 in tRNAs. The protein is tRNA U34 carboxymethyltransferase of Shewanella pealeana (strain ATCC 700345 / ANG-SQ1).